A 509-amino-acid chain; its full sequence is Monocarboxylate transporter 9 (509 aa).

Residues 1–12 are Cytoplasmic-facing; that stretch reads MELKKSPDGGWG. 12 consecutive transmembrane segments (helical) span residues 13 to 33, 53 to 73, 80 to 100, 102 to 122, 137 to 157, 164 to 184, 305 to 325, 342 to 362, 372 to 392, 398 to 418, 433 to 453, and 462 to 482; these read WVIV…PLAV, WVGS…SLCV, PVTI…SFAP, IYFL…LLYT, GLAL…YAAL, FYGL…ILAC, VFSA…PPSL, IMPL…LLGI, LYLY…IPFA, LALL…FPYV, GILM…VGWF, and IAFY…LLAA. Topologically, residues 483-509 are cytoplasmic; that stretch reads LPSWDTCNKQLPKPAPTTFLYKVASNV.

This sequence belongs to the major facilitator superfamily. Monocarboxylate porter (TC 2.A.1.13) family.

It localises to the cell membrane. It carries out the reaction creatine(in) = creatine(out). The enzyme catalyses (R)-carnitine(in) = (R)-carnitine(out). Its function is as follows. Extracellular pH-and Na(+)-sensitive low-affinity creatine transporter. Also functions as a pH-independent carnitine efflux transporter. The protein is Monocarboxylate transporter 9 (SLC16A9) of Pongo abelii (Sumatran orangutan).